A 221-amino-acid chain; its full sequence is Peptide methionine sulfoxide reductase MsrA (221 aa).

Residue Cys54 is part of the active site.

The protein belongs to the MsrA Met sulfoxide reductase family.

It carries out the reaction L-methionyl-[protein] + [thioredoxin]-disulfide + H2O = L-methionyl-(S)-S-oxide-[protein] + [thioredoxin]-dithiol. The enzyme catalyses [thioredoxin]-disulfide + L-methionine + H2O = L-methionine (S)-S-oxide + [thioredoxin]-dithiol. Has an important function as a repair enzyme for proteins that have been inactivated by oxidation. Catalyzes the reversible oxidation-reduction of methionine sulfoxide in proteins to methionine. The sequence is that of Peptide methionine sulfoxide reductase MsrA from Methylobacterium sp. (strain 4-46).